The sequence spans 612 residues: Dihydroxy-acid dehydratase (612 aa).

Mg(2+) is bound at residue aspartate 81. Position 122 (cysteine 122) interacts with [2Fe-2S] cluster. 2 residues coordinate Mg(2+): aspartate 123 and lysine 124. Position 124 is an N6-carboxylysine (lysine 124). [2Fe-2S] cluster is bound at residue cysteine 196. Glutamate 492 is a binding site for Mg(2+). Residue serine 518 is the Proton acceptor of the active site.

The protein belongs to the IlvD/Edd family. As to quaternary structure, homodimer. Requires [2Fe-2S] cluster as cofactor. Mg(2+) serves as cofactor.

It carries out the reaction (2R)-2,3-dihydroxy-3-methylbutanoate = 3-methyl-2-oxobutanoate + H2O. It catalyses the reaction (2R,3R)-2,3-dihydroxy-3-methylpentanoate = (S)-3-methyl-2-oxopentanoate + H2O. It functions in the pathway amino-acid biosynthesis; L-isoleucine biosynthesis; L-isoleucine from 2-oxobutanoate: step 3/4. The protein operates within amino-acid biosynthesis; L-valine biosynthesis; L-valine from pyruvate: step 3/4. In terms of biological role, functions in the biosynthesis of branched-chain amino acids. Catalyzes the dehydration of (2R,3R)-2,3-dihydroxy-3-methylpentanoate (2,3-dihydroxy-3-methylvalerate) into 2-oxo-3-methylpentanoate (2-oxo-3-methylvalerate) and of (2R)-2,3-dihydroxy-3-methylbutanoate (2,3-dihydroxyisovalerate) into 2-oxo-3-methylbutanoate (2-oxoisovalerate), the penultimate precursor to L-isoleucine and L-valine, respectively. The sequence is that of Dihydroxy-acid dehydratase from Cereibacter sphaeroides (strain ATCC 17029 / ATH 2.4.9) (Rhodobacter sphaeroides).